Here is a 228-residue protein sequence, read N- to C-terminus: Ribosomal RNA small subunit methyltransferase G (228 aa).

Residues G70, 121-122, and R138 each bind S-adenosyl-L-methionine; that span reads AE.

This sequence belongs to the methyltransferase superfamily. RNA methyltransferase RsmG family.

It localises to the cytoplasm. Functionally, specifically methylates the N7 position of a guanine in 16S rRNA. This Thermotoga sp. (strain RQ2) protein is Ribosomal RNA small subunit methyltransferase G.